The chain runs to 281 residues: MSHADLARTIEAAWEDRASVGPTTQGTVREAVEAALALLDSGQARVAEKSGSADWQVNQWLKKAVLLSFRLNDMSVIPGGPGGAAWWDKVPSKFEGWDADRFRAAGFRAVPGAVVRRGSYIAPGAVLMPSFVNLGAYVGEGTMVDTWATIGSCAQVGKNCHISGGAGIAGVLEPLQANPVIIEDNCFIGARAEVAEGVIVGEGSVLSMGVYIGASTKIIDRATGEVMYGRVPPYSVVVSGTQPGKPLPDGTPGPSLYCAVIVKRVDAGTRAKTGINELLRD.

Substrate is bound by residues R108 and D145.

This sequence belongs to the transferase hexapeptide repeat family. As to quaternary structure, homotrimer.

The protein localises to the cytoplasm. It catalyses the reaction (S)-2,3,4,5-tetrahydrodipicolinate + succinyl-CoA + H2O = (S)-2-succinylamino-6-oxoheptanedioate + CoA. The protein operates within amino-acid biosynthesis; L-lysine biosynthesis via DAP pathway; LL-2,6-diaminopimelate from (S)-tetrahydrodipicolinate (succinylase route): step 1/3. This Methylobacterium nodulans (strain LMG 21967 / CNCM I-2342 / ORS 2060) protein is 2,3,4,5-tetrahydropyridine-2,6-dicarboxylate N-succinyltransferase.